The sequence spans 263 residues: 4-hydroxy-2-oxo-heptane-1,7-dioate aldolase (263 aa).

His-45 (proton acceptor) is an active-site residue. Substrate is bound at residue Gln-147. Glu-149 serves as a coordination point for a divalent metal cation. Substrate-binding residues include Ala-174 and Asp-175. Asp-175 is an a divalent metal cation binding site.

It belongs to the HpcH/HpaI aldolase family. In terms of assembly, homohexamer; trimer of dimers. It depends on a divalent metal cation as a cofactor.

It carries out the reaction 4-hydroxy-2-oxoheptanedioate = succinate semialdehyde + pyruvate. It functions in the pathway aromatic compound metabolism; 4-hydroxyphenylacetate degradation; pyruvate and succinate semialdehyde from 4-hydroxyphenylacetate: step 7/7. In terms of biological role, catalyzes the reversible retro-aldol cleavage of 4-hydroxy-2-ketoheptane-1,7-dioate (HKHD) to pyruvate and succinic semialdehyde. This Salmonella typhimurium (strain LT2 / SGSC1412 / ATCC 700720) protein is 4-hydroxy-2-oxo-heptane-1,7-dioate aldolase.